Reading from the N-terminus, the 555-residue chain is Connector enhancer of kinase suppressor of ras 3 (555 aa).

Residues tryptophan 7–leucine 72 form the SAM domain. One can recognise a CRIC domain in the interval threonine 80–alanine 174. The 83-residue stretch at glutamate 211–proline 293 folds into the PDZ domain. Disordered stretches follow at residues arginine 308–serine 333, serine 362–aspartate 389, and proline 518–glycine 538. The span at proline 311–threonine 329 shows a compositional bias: low complexity. The DUF1170 domain maps to serine 325 to tryptophan 546. Serine 381 and serine 383 each carry phosphoserine.

The protein belongs to the CNKSR family. In terms of assembly, interacts with epithelial sodium channel ENaC. Interacts directly with SCNN1A (ENaC subunit alpha) and SCNN1B (ENaC subunit beta) C-terminal tails. Interacts with ENaC regulatory proteins NEDD4L, RAF1 and SGK1. As to expression, expressed in kidney.

The protein resides in the cytoplasm. It localises to the apical cell membrane. In terms of biological role, involved in transepithelial sodium transport. Regulates aldosterone-induced and epithelial sodium channel (ENaC)-mediated sodium transport through regulation of ENaC cell surface expression. Acts as a scaffold protein coordinating the assembly of an ENaC-regulatory complex (ERC). The sequence is that of Connector enhancer of kinase suppressor of ras 3 (Cnksr3) from Mus musculus (Mouse).